A 239-amino-acid polypeptide reads, in one-letter code: MNDPRIIVALDFPDSTSALDLVARLDPSLCRLKVGKELFTAAGPQLVEKMMGKGFEIFLDLKFHDIPTTVANACRTAAALGVWMMNVHALGGRRMLAAAREAVPPGSVRLIAVTLLTSMDQSDLDEVGLKGEPQDVVQRLAALTRDCGLDGVVCSPLETSRLRNAIGADFCLVTPGIRPADSSPDEQRRISTPRQAIENGADYLVIGRPITQATEPAVMLSRLNKDIEDIRDVSRFDNF.

Substrate is bound by residues Asp11, Lys33, 60-69, Thr117, Arg178, Gln187, Gly207, and Arg208; that span reads DLKFHDIPTT. Lys62 serves as the catalytic Proton donor.

This sequence belongs to the OMP decarboxylase family. Type 1 subfamily. In terms of assembly, homodimer.

The catalysed reaction is orotidine 5'-phosphate + H(+) = UMP + CO2. Its pathway is pyrimidine metabolism; UMP biosynthesis via de novo pathway; UMP from orotate: step 2/2. In terms of biological role, catalyzes the decarboxylation of orotidine 5'-monophosphate (OMP) to uridine 5'-monophosphate (UMP). In Nitrosospira multiformis (strain ATCC 25196 / NCIMB 11849 / C 71), this protein is Orotidine 5'-phosphate decarboxylase.